A 593-amino-acid chain; its full sequence is Copine-5 (593 aa).

The C2 1 domain occupies 2–134 (EQPEDMASLS…SSGSRLEKPL (133 aa)). A Phosphoserine modification is found at S19. 7 residues coordinate Ca(2+): D38, D44, D98, D100, S103, K108, and D110. Residue S103 is modified to Phosphoserine. S140 is modified (phosphoserine). The 124-residue stretch at 161 to 284 (KCGTIILSAE…ARGQSQFNIY (124 aa)) folds into the C2 2 domain. Ca(2+) is bound by residues D192, D198, D254, D256, and D262. The region spanning 328-554 (NFTVAIDFTA…DVLAEIPDQL (227 aa)) is the VWFA domain. Residues 562-593 (GIRPRPPPAAPAQSPPQSPAHSPPGSPVHTHI) are disordered. The segment covering 565–587 (PRPPPAAPAQSPPQSPAHSPPGS) has biased composition (pro residues).

It belongs to the copine family. It depends on Ca(2+) as a cofactor. As to expression, expressed in the cerebra and cerebellum of newborn brain. Expressed in the eye, lung and muscles but weakly expressed in the adult brain (at protein level).

It localises to the perikaryon. Its subcellular location is the cell projection. Functionally, probable calcium-dependent phospholipid-binding protein that may play a role in calcium-mediated intracellular processes. Plays a role in dendrite formation by melanocytes. This is Copine-5 from Mus musculus (Mouse).